Reading from the N-terminus, the 193-residue chain is Inosine triphosphate pyrophosphatase (193 aa).

Position 10–15 (10–15 (TGNANK)) interacts with ITP. Residue E42 coordinates Mg(2+). Residues K54, 70–71 (DT), K87, 146–149 (FGWD), K169, and 174–175 (HR) contribute to the ITP site.

It belongs to the HAM1 NTPase family. As to quaternary structure, homodimer. The cofactor is Mg(2+). It depends on Mn(2+) as a cofactor.

It is found in the cytoplasm. It localises to the nucleus. The enzyme catalyses ITP + H2O = IMP + diphosphate + H(+). The catalysed reaction is dITP + H2O = dIMP + diphosphate + H(+). It catalyses the reaction XTP + H2O = XMP + diphosphate + H(+). Its function is as follows. Pyrophosphatase that hydrolyzes non-canonical purine nucleotides such as inosine triphosphate (ITP), deoxyinosine triphosphate (dITP) or xanthosine 5'-triphosphate (XTP) to their respective monophosphate derivatives. The enzyme does not distinguish between the deoxy- and ribose forms. Probably excludes non-canonical purines from RNA and DNA precursor pools, thus preventing their incorporation into RNA and DNA and avoiding chromosomal lesions. This is Inosine triphosphate pyrophosphatase from Mycosarcoma maydis (Corn smut fungus).